Here is a 576-residue protein sequence, read N- to C-terminus: Sodium/proton antiporter 1 (576 aa).

The N-terminal 60 residues, methionine 1–arginine 60, are a transit peptide targeting the chloroplast. Transmembrane regions (helical) follow at residues threonine 237–threonine 257, leucine 279–valine 299, phenylalanine 320–valine 340, alanine 357–phenylalanine 377, alanine 379–leucine 399, glycine 426–leucine 446, leucine 462–alanine 482, leucine 501–valine 521, and phenylalanine 541–phenylalanine 561.

This sequence belongs to the NhaD Na(+)/H(+) (TC 2.A.62) antiporter family. In terms of tissue distribution, mostly expressed in mature and senescent leaves, and, to a lower extent, in seeds, roots, shoots, flowers and developing siliques.

It localises to the plastid. Its subcellular location is the chloroplast membrane. It is found in the chloroplast envelope. Functionally, na(+)/H(+) antiporter that extrudes sodium in exchange for external protons. This Arabidopsis thaliana (Mouse-ear cress) protein is Sodium/proton antiporter 1.